Reading from the N-terminus, the 502-residue chain is Glycerol kinase (502 aa).

ADP is bound at residue T14. The ATP site is built by T14, T15, and S16. T14 provides a ligand contact to sn-glycerol 3-phosphate. R18 lines the ADP pocket. R84, E85, Y136, and D246 together coordinate sn-glycerol 3-phosphate. 5 residues coordinate glycerol: R84, E85, Y136, D246, and Q247. Positions 268 and 311 each coordinate ADP. The ATP site is built by T268, G311, Q315, and G412. G412 and N416 together coordinate ADP.

This sequence belongs to the FGGY kinase family. In terms of assembly, homotetramer and homodimer (in equilibrium). Heterodimer with EIIA-Glc. Binds 1 zinc ion per glycerol kinase EIIA-Glc dimer. The zinc ion is important for dimerization.

The catalysed reaction is glycerol + ATP = sn-glycerol 3-phosphate + ADP + H(+). It functions in the pathway polyol metabolism; glycerol degradation via glycerol kinase pathway; sn-glycerol 3-phosphate from glycerol: step 1/1. Its activity is regulated as follows. Activity of this regulatory enzyme is affected by several metabolites. Allosterically and non-competitively inhibited by fructose 1,6-bisphosphate (FBP) and unphosphorylated phosphocarrier protein EIIA-Glc (III-Glc), an integral component of the bacterial phosphotransferase (PTS) system. In terms of biological role, key enzyme in the regulation of glycerol uptake and metabolism. Catalyzes the phosphorylation of glycerol to yield sn-glycerol 3-phosphate. The chain is Glycerol kinase from Shigella boydii serotype 18 (strain CDC 3083-94 / BS512).